Reading from the N-terminus, the 63-residue chain is Large ribosomal subunit protein bL28 (63 aa).

The protein belongs to the bacterial ribosomal protein bL28 family.

The sequence is that of Large ribosomal subunit protein bL28 from Clostridium kluyveri (strain NBRC 12016).